The primary structure comprises 221 residues: Transmembrane protein 225B (221 aa).

4 membrane-spanning segments follow: residues 14–34 (WAIV…VSIF), 77–97 (VFLL…MPFA), 109–129 (FVLA…LVLH), and 147–167 (VLWP…AGTI).

It is found in the membrane. This Homo sapiens (Human) protein is Transmembrane protein 225B.